A 355-amino-acid chain; its full sequence is Glycerol-1-phosphate dehydrogenase [NAD(P)+] (355 aa).

NAD(+) is bound by residues 101-105 (GKSID) and 123-126 (TAAS). D128 lines the substrate pocket. S132 is an NAD(+) binding site. Substrate is bound at residue D175. Zn(2+) is bound by residues D175 and H255. H259 lines the substrate pocket. Position 271 (H271) interacts with Zn(2+).

It belongs to the glycerol-1-phosphate dehydrogenase family. Homodimer. Zn(2+) is required as a cofactor.

It is found in the cytoplasm. It catalyses the reaction sn-glycerol 1-phosphate + NAD(+) = dihydroxyacetone phosphate + NADH + H(+). The catalysed reaction is sn-glycerol 1-phosphate + NADP(+) = dihydroxyacetone phosphate + NADPH + H(+). It participates in membrane lipid metabolism; glycerophospholipid metabolism. Functionally, catalyzes the NAD(P)H-dependent reduction of dihydroxyacetonephosphate (DHAP or glycerone phosphate) to glycerol 1-phosphate (G1P). The G1P thus generated is used as the glycerophosphate backbone of phospholipids in the cellular membranes of Archaea. The polypeptide is Glycerol-1-phosphate dehydrogenase [NAD(P)+] (Staphylothermus marinus (strain ATCC 43588 / DSM 3639 / JCM 9404 / F1)).